Here is a 200-residue protein sequence, read N- to C-terminus: Segregation and condensation protein B (200 aa).

Belongs to the ScpB family. As to quaternary structure, homodimer. Homodimerization may be required to stabilize the binding of ScpA to the Smc head domains. Component of a cohesin-like complex composed of ScpA, ScpB and the Smc homodimer, in which ScpA and ScpB bind to the head domain of Smc. The presence of the three proteins is required for the association of the complex with DNA.

It localises to the cytoplasm. In terms of biological role, participates in chromosomal partition during cell division. May act via the formation of a condensin-like complex containing Smc and ScpA that pull DNA away from mid-cell into both cell halves. In Lactobacillus delbrueckii subsp. bulgaricus (strain ATCC 11842 / DSM 20081 / BCRC 10696 / JCM 1002 / NBRC 13953 / NCIMB 11778 / NCTC 12712 / WDCM 00102 / Lb 14), this protein is Segregation and condensation protein B.